A 571-amino-acid chain; its full sequence is DNA primase (571 aa).

A CHC2-type zinc finger spans residues 20-44 (CPFHKEKTPSFQVDTEKGYYHCFGC). The region spanning 229 to 309 (AELVVVEGYM…KFRVRATSVP (81 aa)) is the Toprim domain. Residues glutamate 235, aspartate 280, and aspartate 282 each coordinate Mg(2+).

The protein belongs to the DnaG primase family. Monomer. Interacts with DnaB. The cofactor is Zn(2+). Mg(2+) serves as cofactor.

It catalyses the reaction ssDNA + n NTP = ssDNA/pppN(pN)n-1 hybrid + (n-1) diphosphate.. RNA polymerase that catalyzes the synthesis of short RNA molecules used as primers for DNA polymerase during DNA replication. The protein is DNA primase of Deinococcus radiodurans (strain ATCC 13939 / DSM 20539 / JCM 16871 / CCUG 27074 / LMG 4051 / NBRC 15346 / NCIMB 9279 / VKM B-1422 / R1).